The chain runs to 397 residues: Lysophospholipid transporter LplT (397 aa).

Residues 1-17 (MSESVHTNTSLWSKGMK) lie on the Periplasmic side of the membrane. Residues 18-38 (AVIVAQFLSAFGDNALLFATL) traverse the membrane as a helical segment. The Cytoplasmic segment spans residues 39-52 (ALLKAQFYPEWSQP). The chain crosses the membrane as a helical span at residues 53–73 (ILQMVFVGAYILFAPFVGQVA). The Periplasmic segment spans residues 74–90 (DSFAKGRVMMFANGLKL). The chain crosses the membrane as a helical span at residues 91 to 111 (LGAASICFGINPFLGYTLVGV). Residues 112–144 (GAAAYSPAKYGILGELTTGSKLVKANGLMEAST) lie on the Cytoplasmic side of the membrane. A helical membrane pass occupies residues 145–165 (IAAILLGSVAGGVLADWHILV). A topological domain (periplasmic) is located at residue Ala-166. The helical transmembrane segment at 167-187 (LAACALAYGGAVVANIYIPKL) threads the bilayer. Residues 188 to 226 (AAARPGQSWNLISMTRSFLNACTSLWRNGETRFSLVGTS) lie on the Cytoplasmic side of the membrane. Residues 227–247 (LFWGAGVTLRFLLVLWVPVAL) traverse the membrane as a helical segment. Topologically, residues 248–256 (GITDNATPT) are periplasmic. A helical transmembrane segment spans residues 257 to 277 (YLNAMVAIGIVVGAGAAAKLV). Over 278-280 (TLE) the chain is Cytoplasmic. Residues 281–301 (TVSRCMPAGILIGVVVLIFSL) traverse the membrane as a helical segment. Residues 302-304 (QHE) lie on the Periplasmic side of the membrane. Residues 305–325 (LLPAYALLMLIGVLGGFFVVP) form a helical membrane-spanning segment. Over 326–343 (LNALLQERGKKSVGAGNA) the chain is Cytoplasmic. The helical transmembrane segment at 344 to 364 (IAVQNLGENSAMLLMLGIYSL) threads the bilayer. Residues 365 to 366 (AV) lie on the Periplasmic side of the membrane. Residues 367–387 (MVGIPVVPIGIGFGALFALAI) form a helical membrane-spanning segment. Over 388-397 (TALWIWQRRH) the chain is Cytoplasmic.

It belongs to the major facilitator superfamily. LplT (TC 2.A.1.42) family.

The protein resides in the cell inner membrane. Its function is as follows. Catalyzes the facilitated diffusion of 2-acyl-glycero-3-phosphoethanolamine (2-acyl-GPE) into the cell. The polypeptide is Lysophospholipid transporter LplT (Escherichia coli O6:K15:H31 (strain 536 / UPEC)).